The following is a 383-amino-acid chain: Meiotically up-regulated gene 93 protein (383 aa).

The stretch at 75 to 108 (KKVIWRRGLAYLRLGHPHLANRDWEHSLELDPNN) is one TPR repeat.

Its subcellular location is the cytoplasm. It is found in the nucleus. Functionally, has a role in meiosis. This is Meiotically up-regulated gene 93 protein (mug93) from Schizosaccharomyces pombe (strain 972 / ATCC 24843) (Fission yeast).